Here is a 209-residue protein sequence, read N- to C-terminus: Chloramphenicol acetyltransferase (209 aa).

Catalysis depends on His189, which acts as the Proton acceptor.

Belongs to the chloramphenicol acetyltransferase family. In terms of assembly, homotrimer.

It catalyses the reaction chloramphenicol + acetyl-CoA = chloramphenicol 3-acetate + CoA. Functionally, this enzyme is an effector of chloramphenicol resistance in bacteria. This is Chloramphenicol acetyltransferase from Staphylococcus aureus.